The following is a 962-amino-acid chain: Exportin-T (962 aa).

Methionine 1 carries the N-acetylmethionine modification. The interval 1–385 (MDEQALLGLN…MLAVMKKLTY (385 aa)) is necessary for interaction with Ran, nuclear localization and nuclear import. The necessary for tRNA-binding, cytoplasmic localization and nuclear export stretch occupies residues 443–962 (FMEVEVAIRL…LKVFFQRAKP (520 aa)). Lysine 634 is modified (N6-acetyllysine).

It belongs to the exportin family. Found in a complex with XPOT, Ran and tRNA. Probably found in a complex with nucleoporins. Interacts with Ran and tRNA in a GTP-dependent manner.

It localises to the nucleus. It is found in the cytoplasm. Its function is as follows. Mediates the nuclear export of aminoacylated tRNAs. In the nucleus binds to tRNA and to the GTPase Ran in its active GTP-bound form. Docking of this trimeric complex to the nuclear pore complex (NPC) is mediated through binding to nucleoporins. Upon transit of a nuclear export complex into the cytoplasm, disassembling of the complex and hydrolysis of Ran-GTP to Ran-GDP (induced by RANBP1 and RANGAP1, respectively) cause release of the tRNA from the export receptor. XPOT then return to the nuclear compartment and mediate another round of transport. The directionality of nuclear export is thought to be conferred by an asymmetric distribution of the GTP- and GDP-bound forms of Ran between the cytoplasm and nucleus. This Homo sapiens (Human) protein is Exportin-T (XPOT).